The following is a 278-amino-acid chain: 4-deoxy-L-threo-5-hexosulose-uronate ketol-isomerase (278 aa).

Positions 196, 198, 203, and 245 each coordinate Zn(2+).

Belongs to the KduI family. Homohexamer. The cofactor is Zn(2+).

The enzyme catalyses 5-dehydro-4-deoxy-D-glucuronate = 3-deoxy-D-glycero-2,5-hexodiulosonate. It functions in the pathway glycan metabolism; pectin degradation; 2-dehydro-3-deoxy-D-gluconate from pectin: step 4/5. Functionally, catalyzes the isomerization of 5-dehydro-4-deoxy-D-glucuronate to 3-deoxy-D-glycero-2,5-hexodiulosonate. In Escherichia coli (strain UTI89 / UPEC), this protein is 4-deoxy-L-threo-5-hexosulose-uronate ketol-isomerase.